A 974-amino-acid polypeptide reads, in one-letter code: Cell division control protein 15 (974 aa).

The region spanning Tyr25–Ile272 is the Protein kinase domain. ATP-binding positions include Ile31–Val39 and Lys54. Catalysis depends on Asp146, which acts as the Proton acceptor. A self association domain region spans residues Cys360–Leu702. Low complexity predominate over residues Ser554–Pro563. Residues Ser554–Met592 are disordered. 2 positions are modified to phosphoserine: Ser561 and Ser567. Residues Thr564–Pro579 are compositionally biased toward polar residues. The segment at Thr751 to Thr974 is auto-inhibitory domain. Thr870 carries the post-translational modification Phosphothreonine. The disordered stretch occupies residues Ala941–Thr974. The span at Thr948 to Asp963 shows a compositional bias: basic and acidic residues.

This sequence belongs to the protein kinase superfamily. Ser/Thr protein kinase family. Homodimer. Interacts with TEM1. Post-translationally, phosphorylation by CDK1 reduces the binding to the mother spindle pole body. The extent of phosphorylation gradually increases during cell-cycle progression until some point during late anaphase/telophase when it is rapidly dephosphorylated by CDC14. Phosphorylation inhibits kinase activity and dephosphorylation by CDC14 activates CDC15.

It is found in the cytoplasm. It localises to the cytoskeleton. The protein localises to the spindle pole. Its subcellular location is the bud neck. The enzyme catalyses L-seryl-[protein] + ATP = O-phospho-L-seryl-[protein] + ADP + H(+). It catalyses the reaction L-threonyl-[protein] + ATP = O-phospho-L-threonyl-[protein] + ADP + H(+). With respect to regulation, kinase activity is inhibited by phosphorylation and activated by dephosphorylation by CDC14. Its function is as follows. Protein kinase of the mitotic exit network (MEN) essential for late nuclear division in the mitotic cycle. Promotes mitotic exit by phosphorylating DBF2 and directly switching on DBF2 kinase activity. Involved in the localization of DBF2 and DBF20 to the neck which is necessary to undergo cytokinesis. Plays a role in segregation of chromosomes during recovery from spindle checkpoint activation. Required for spindle pole localization of CDK1 and inactivation of CDC2 kinase activity at the end of mitosis. Required for spindle disassembly after meiosis II and plays a role in spore morphogenesis. This is Cell division control protein 15 (CDC15) from Saccharomyces cerevisiae (strain ATCC 204508 / S288c) (Baker's yeast).